The primary structure comprises 103 residues: MTYKIGVVGDKDSVSPFRLFGFDVQHGTTKTEIRKTIDEMAKNEYGVIYITEQCANLVPETIERYKGQLTPAIILIPSHQGTLGIGLEEIQNSVEKAVGQNIL.

This sequence belongs to the V-ATPase F subunit family.

Involved in ATP-driven sodium extrusion. This Enterococcus hirae (strain ATCC 9790 / DSM 20160 / JCM 8729 / LMG 6399 / NBRC 3181 / NCIMB 6459 / NCDO 1258 / NCTC 12367 / WDCM 00089 / R) protein is V-type sodium ATPase subunit G (ntpG).